A 348-amino-acid chain; its full sequence is Rhodopsin (348 aa).

Topologically, residues 1-33 are extracellular; the sequence is TEGPYFYVPMVNTTGIVRSPYEYPQYYLVNPAA. A glycan (N-linked (GlcNAc...) asparagine) is linked at N12. The helical transmembrane segment at 34-58 threads the bilayer; it reads FAILGAYMFFLIIVGFPVNFMTLYV. At 59 to 70 the chain is on the cytoplasmic side; that stretch reads TLEHKKLRTPLN. A helical transmembrane segment spans residues 71-93; it reads YILLNLAVADLFMVIGGFTTTMY. The Extracellular segment spans residues 94 to 107; the sequence is TSMHGYFVLGRLGC. An intrachain disulfide couples C107 to C184. The chain crosses the membrane as a helical span at residues 108 to 130; sequence NLEGFFATLGGMISLWSLAVLAI. The 'Ionic lock' involved in activated form stabilization signature appears at 131–133; the sequence is ERW. Residues 131–149 are Cytoplasmic-facing; that stretch reads ERWVVVCKPISNFRFGENH. Residues 150–170 traverse the membrane as a helical segment; sequence AIMGVSLTWGMALACTVPPLV. Residues 171 to 199 lie on the Extracellular side of the membrane; it reads GWSRYIPEGMQCSCGIDYYTRAEGFNNET. The N-linked (GlcNAc...) asparagine glycan is linked to N197. A helical transmembrane segment spans residues 200–221; that stretch reads FVLYMFCCHFTVPLTIIFFCYG. The Cytoplasmic segment spans residues 222–249; the sequence is RLLCAVKEAAAAQQESETTQRAEREVTR. Residues 250 to 271 form a helical membrane-spanning segment; that stretch reads MVVIMVIGFLVCWLPYASVAWF. Residues 272 to 283 are Extracellular-facing; that stretch reads VFTHQGSEFGPL. The chain crosses the membrane as a helical span at residues 284–305; the sequence is FMTIPAFFAKSSAIYNPMIYIC. Residue K293 is modified to N6-(retinylidene)lysine. Residues 306–348 lie on the Cytoplasmic side of the membrane; it reads MNKQFRHCMITTLFCGKNPFEGEEEGASSTKTEASSASSVSPA. C320 carries the S-palmitoyl cysteine lipid modification. The interval 327-348 is disordered; it reads GEEEGASSTKTEASSASSVSPA. Over residues 332 to 348 the composition is skewed to low complexity; the sequence is ASSTKTEASSASSVSPA.

This sequence belongs to the G-protein coupled receptor 1 family. Opsin subfamily. Post-translationally, phosphorylated on some or all of the serine and threonine residues present in the C-terminal region. In terms of processing, contains one covalently linked retinal chromophore.

The protein resides in the membrane. Its subcellular location is the cell projection. The protein localises to the cilium. It is found in the photoreceptor outer segment. Photoreceptor required for image-forming vision at low light intensity. While most salt water fish species use retinal as chromophore, most freshwater fish use 3-dehydroretinal, or a mixture of retinal and 3-dehydroretinal. Light-induced isomerization of 11-cis to all-trans retinal triggers a conformational change that activates signaling via G-proteins. Subsequent receptor phosphorylation mediates displacement of the bound G-protein alpha subunit by arrestin and terminates signaling. The sequence is that of Rhodopsin (rho) from Sargocentron xantherythrum (Hawaiian squirrelfish).